The primary structure comprises 366 residues: uncharacterized protein (366 aa).

Positions 63–288 (ARVAMVGFPS…LLEKMWEYLA (226 aa)) constitute an OBG-type G domain. GTP contacts are provided by residues 69–76 (GFPSVGKS), 115–119 (DLPGI), and 246–249 (NKVD). One can recognise a TGS domain in the interval 288-365 (ALVRVYTKKP…DHEDVIQIVK (78 aa)).

The protein belongs to the TRAFAC class OBG-HflX-like GTPase superfamily. OBG GTPase family.

This is an uncharacterized protein from Caenorhabditis elegans.